A 150-amino-acid chain; its full sequence is Large ribosomal subunit protein bL9 (150 aa).

Belongs to the bacterial ribosomal protein bL9 family.

Its function is as follows. Binds to the 23S rRNA. This is Large ribosomal subunit protein bL9 from Polynucleobacter asymbioticus (strain DSM 18221 / CIP 109841 / QLW-P1DMWA-1) (Polynucleobacter necessarius subsp. asymbioticus).